A 229-amino-acid polypeptide reads, in one-letter code: Demethylmenaquinone methyltransferase (229 aa).

Residues threonine 62, aspartate 80, 100–101 (DG), and serine 117 contribute to the S-adenosyl-L-methionine site.

This sequence belongs to the class I-like SAM-binding methyltransferase superfamily. MenG/UbiE family.

The catalysed reaction is a 2-demethylmenaquinol + S-adenosyl-L-methionine = a menaquinol + S-adenosyl-L-homocysteine + H(+). It participates in quinol/quinone metabolism; menaquinone biosynthesis; menaquinol from 1,4-dihydroxy-2-naphthoate: step 2/2. Methyltransferase required for the conversion of demethylmenaquinol (DMKH2) to menaquinol (MKH2). This is Demethylmenaquinone methyltransferase from Corynebacterium kroppenstedtii (strain DSM 44385 / JCM 11950 / CIP 105744 / CCUG 35717).